The chain runs to 224 residues: Uracil-DNA glycosylase 2 (224 aa).

Residue Asp64 is the Proton acceptor of the active site.

This sequence belongs to the uracil-DNA glycosylase (UDG) superfamily. UNG family.

Its subcellular location is the cytoplasm. The enzyme catalyses Hydrolyzes single-stranded DNA or mismatched double-stranded DNA and polynucleotides, releasing free uracil.. Its function is as follows. Excises uracil residues from the DNA which can arise as a result of misincorporation of dUMP residues by DNA polymerase or due to deamination of cytosine. The sequence is that of Uracil-DNA glycosylase 2 from Listeria innocua serovar 6a (strain ATCC BAA-680 / CLIP 11262).